A 365-amino-acid chain; its full sequence is Methylthioribose-1-phosphate isomerase (365 aa).

Residues 53–55 (RGA), arginine 90, and glutamine 201 each bind substrate. The active-site Proton donor is the aspartate 242. 252–253 (NK) contributes to the substrate binding site.

It belongs to the eIF-2B alpha/beta/delta subunits family. MtnA subfamily.

It carries out the reaction 5-(methylsulfanyl)-alpha-D-ribose 1-phosphate = 5-(methylsulfanyl)-D-ribulose 1-phosphate. Its pathway is amino-acid biosynthesis; L-methionine biosynthesis via salvage pathway; L-methionine from S-methyl-5-thio-alpha-D-ribose 1-phosphate: step 1/6. In terms of biological role, catalyzes the interconversion of methylthioribose-1-phosphate (MTR-1-P) into methylthioribulose-1-phosphate (MTRu-1-P). In Methylorubrum extorquens (strain CM4 / NCIMB 13688) (Methylobacterium extorquens), this protein is Methylthioribose-1-phosphate isomerase.